A 553-amino-acid polypeptide reads, in one-letter code: Solute carrier family 22 member 4 (553 aa).

Over 1 to 20 (MRDYDEVIAFLGEWGPFQRL) the chain is Cytoplasmic. Residues 21–41 (IFFLLSASIIPNGFNGMSVVF) form a helical membrane-spanning segment. Over 42-142 (LAGTPEHRCL…NLVCEDDWKT (101 aa)) the chain is Extracellular. Residues N57, N64, and N91 are each glycosylated (N-linked (GlcNAc...) asparagine). Residues 143–163 (PLTTSLFFVGVLCGSFVSGQL) form a helical membrane-spanning segment. The Cytoplasmic portion of the chain corresponds to 164 to 171 (SDRFGRKK). A helical transmembrane segment spans residues 172–192 (VLFATMAVQTGFSFVQIFSTN). Over 193–197 (WEMFT) the chain is Extracellular. The chain crosses the membrane as a helical span at residues 198 to 218 (VLFAIVGMGQISNYVVAFILG). Residue 218–225 (GTEILSKS) participates in ATP binding. Over 219-232 (TEILSKSVRIIFST) the chain is Cytoplasmic. Residues 233 to 253 (LGVCTFFAIGYMVLPLFAYFI) form a helical membrane-spanning segment. Topologically, residues 254 to 257 (RDWR) are extracellular. The chain crosses the membrane as a helical span at residues 258–278 (MLLLALTLPGLFCVPLWWFIP). Over 279 to 339 (ESPRWLISQR…IILDLFRTRN (61 aa)) the chain is Cytoplasmic. A helical transmembrane segment spans residues 340–360 (IATITVMAVMLWMLTSVGYFA). The Extracellular segment spans residues 361-373 (LSLNVPNLHGDVY). A helical transmembrane segment spans residues 374–394 (LNCFLSGLIEVPAYFTAWLLL). The Cytoplasmic portion of the chain corresponds to 395-400 (RTLPRR). The chain crosses the membrane as a helical span at residues 401–421 (YIIAGVLFWGGGVLLLIQVVP). Over 422–428 (EDYNFVS) the chain is Extracellular. Residues 429–449 (IGLVMLGKFGITSAFSMLYVF) form a helical membrane-spanning segment. Over 450–462 (TAELYPTLVRNMA) the chain is Cytoplasmic. Residues 463 to 483 (VGITSMASRVGSIIAPYFVYL) traverse the membrane as a helical segment. Residues 484-488 (GAYNR) are Extracellular-facing. Residues 489–509 (LLPYILMGSLTVLIGIITLFF) form a helical membrane-spanning segment. Residues 510-553 (PESFGVTLPENLEQMQKVRGFRCGKKSTVSVDREESPKVLITAF) lie on the Cytoplasmic side of the membrane.

This sequence belongs to the major facilitator (TC 2.A.1) superfamily. Organic cation transporter (TC 2.A.1.19) family. Interacts with PDZK1. Expressed in kidney. Expressed in small intestines. Expressed in liver in non-parenchymal liver tissue such as sinusoidal vessels. Weakly expressed in lung and brain. Expressed in testis and spleen. Expressed in heart.

The protein resides in the apical cell membrane. It is found in the mitochondrion membrane. It localises to the basal cell membrane. It carries out the reaction ergothioneine(out) + Na(+)(out) = ergothioneine(in) + Na(+)(in). The catalysed reaction is acetylcholine(in) = acetylcholine(out). The enzyme catalyses (R)-carnitine(out) + Na(+)(out) = (R)-carnitine(in) + Na(+)(in). It catalyses the reaction glycine betaine(out) + Na(+)(out) = glycine betaine(in) + Na(+)(in). Allosterically activated by intracellular ATP. In terms of biological role, transporter that mediates the transport of endogenous and microbial zwitterions and organic cations. Functions as a Na(+)-dependent and pH-dependent high affinity microbial symporter of potent food-derived antioxidant ergothioeine. Transports one sodium ion with one ergothioeine molecule. Involved in the absorption of ergothioneine from the luminal/apical side of the small intestine and renal tubular cells, and into non-parenchymal liver cells, thereby contributing to maintain steady-state ergothioneine level in the body. Also mediates the bidirectional transport of acetycholine, although the exact transport mechanism has not been fully identified yet. Most likely exports anti-inflammatory acetylcholine in non-neuronal tissues, thereby contributing to the non-neuronal cholinergic system. Displays a general physiological role linked to better survival by controlling inflammation and oxidative stress, which may be related to ergothioneine and acetycholine transports. May also function as a low-affinity Na(+)-dependent transporter of L-carnitine through the mitochondrial membrane, thereby maintaining intracellular carnitine homeostasis. May contribute to regulate the transport of cationic compounds in testis across the blood-testis-barrier. The sequence is that of Solute carrier family 22 member 4 from Mus musculus (Mouse).